A 348-amino-acid chain; its full sequence is UDP-glucose 4-epimerase (348 aa).

T125 is a substrate binding site. Y149 acts as the Proton acceptor in catalysis.

Belongs to the NAD(P)-dependent epimerase/dehydratase family. The cofactor is NAD(+).

The catalysed reaction is UDP-alpha-D-glucose = UDP-alpha-D-galactose. The protein operates within carbohydrate metabolism; galactose metabolism. It functions in the pathway glycan metabolism; exopolysaccharide biosynthesis. The polypeptide is UDP-glucose 4-epimerase (exoB) (Azospirillum brasilense).